Consider the following 203-residue polypeptide: Outer-membrane lipoprotein LolB (203 aa).

The N-terminal stretch at 1–21 (MTGRWSPRLLAGLLAALVLSG) is a signal peptide. C22 carries the N-palmitoyl cysteine lipid modification. C22 carries S-diacylglycerol cysteine lipidation.

Belongs to the LolB family. In terms of assembly, monomer.

The protein localises to the cell outer membrane. Functionally, plays a critical role in the incorporation of lipoproteins in the outer membrane after they are released by the LolA protein. In Halorhodospira halophila (strain DSM 244 / SL1) (Ectothiorhodospira halophila (strain DSM 244 / SL1)), this protein is Outer-membrane lipoprotein LolB.